The sequence spans 334 residues: Ketol-acid reductoisomerase (NADP(+)) (334 aa).

Residues 2-181 (TKVYYDETVT…GATRAGVIET (180 aa)) enclose the KARI N-terminal Rossmann domain. NADP(+) is bound by residues 25–28 (YGSQ), Arg48, Ser52, and 82–85 (DEIQ). Residue His107 is part of the active site. Residue Gly133 coordinates NADP(+). A KARI C-terminal knotted domain is found at 182 to 327 (TFKEETETDL…RELREMMPFI (146 aa)). Mg(2+) is bound by residues Asp190, Glu194, Glu226, and Glu230. Ser251 serves as a coordination point for substrate.

It belongs to the ketol-acid reductoisomerase family. The cofactor is Mg(2+).

The enzyme catalyses (2R)-2,3-dihydroxy-3-methylbutanoate + NADP(+) = (2S)-2-acetolactate + NADPH + H(+). It catalyses the reaction (2R,3R)-2,3-dihydroxy-3-methylpentanoate + NADP(+) = (S)-2-ethyl-2-hydroxy-3-oxobutanoate + NADPH + H(+). The protein operates within amino-acid biosynthesis; L-isoleucine biosynthesis; L-isoleucine from 2-oxobutanoate: step 2/4. It participates in amino-acid biosynthesis; L-valine biosynthesis; L-valine from pyruvate: step 2/4. Its function is as follows. Involved in the biosynthesis of branched-chain amino acids (BCAA). Catalyzes an alkyl-migration followed by a ketol-acid reduction of (S)-2-acetolactate (S2AL) to yield (R)-2,3-dihydroxy-isovalerate. In the isomerase reaction, S2AL is rearranged via a Mg-dependent methyl migration to produce 3-hydroxy-3-methyl-2-ketobutyrate (HMKB). In the reductase reaction, this 2-ketoacid undergoes a metal-dependent reduction by NADPH to yield (R)-2,3-dihydroxy-isovalerate. In Staphylococcus epidermidis (strain ATCC 35984 / DSM 28319 / BCRC 17069 / CCUG 31568 / BM 3577 / RP62A), this protein is Ketol-acid reductoisomerase (NADP(+)).